The following is a 197-amino-acid chain: dITP/XTP pyrophosphatase (197 aa).

8–13 contacts substrate; the sequence is TGNAGK. Mg(2+) is bound by residues glutamate 40 and aspartate 69. Catalysis depends on aspartate 69, which acts as the Proton acceptor. Substrate is bound by residues serine 70, 154-157, lysine 177, and 182-183; these read FGYD and HR.

The protein belongs to the HAM1 NTPase family. Homodimer. Requires Mg(2+) as cofactor.

It catalyses the reaction XTP + H2O = XMP + diphosphate + H(+). It carries out the reaction dITP + H2O = dIMP + diphosphate + H(+). The catalysed reaction is ITP + H2O = IMP + diphosphate + H(+). In terms of biological role, pyrophosphatase that catalyzes the hydrolysis of nucleoside triphosphates to their monophosphate derivatives, with a high preference for the non-canonical purine nucleotides XTP (xanthosine triphosphate), dITP (deoxyinosine triphosphate) and ITP. Seems to function as a house-cleaning enzyme that removes non-canonical purine nucleotides from the nucleotide pool, thus preventing their incorporation into DNA/RNA and avoiding chromosomal lesions. The chain is dITP/XTP pyrophosphatase (rdgB) from Salmonella typhi.